Consider the following 62-residue polypeptide: Beta-defensin 133 (62 aa).

The N-terminal stretch at 1 to 21 (MKIHIFLFVLFFFLVPIATRG) is a signal peptide. Intrachain disulfides connect cysteine 32-cysteine 60 and cysteine 39-cysteine 53.

This sequence belongs to the beta-defensin family.

The protein resides in the secreted. Functionally, has antibacterial activity. This Pan troglodytes (Chimpanzee) protein is Beta-defensin 133 (DEFB133).